The primary structure comprises 213 residues: Ribosomal RNA small subunit methyltransferase G (213 aa).

S-adenosyl-L-methionine is bound by residues Gly-75, Phe-80, 128-129 (IE), and Arg-144.

It belongs to the methyltransferase superfamily. RNA methyltransferase RsmG family.

It is found in the cytoplasm. The enzyme catalyses guanosine(527) in 16S rRNA + S-adenosyl-L-methionine = N(7)-methylguanosine(527) in 16S rRNA + S-adenosyl-L-homocysteine. Specifically methylates the N7 position of guanine in position 527 of 16S rRNA. This is Ribosomal RNA small subunit methyltransferase G from Brucella abortus (strain S19).